A 180-amino-acid chain; its full sequence is Fucolectin-2 (180 aa).

The first 22 residues, 1 to 22, serve as a signal peptide directing secretion; sequence MKVKMIMLLFQILAILTLKSDS. Residues 31 to 179 form an F5/8 type C-like region; that stretch reads QENVALRGRA…VEVNVLFPAP (149 aa). Residues N58, D61, N63, and S72 each coordinate Ca(2+). 3 disulfides stabilise this stretch: C73–C168, C104–C105, and C130–C146. Positions 75 and 101 each coordinate alpha-L-fucose. Positions 101–103 match the Cell attachment site motif; that stretch reads RGD. R108 is an alpha-L-fucose binding site. Residues C168 and E169 each contribute to the Ca(2+) site.

This sequence belongs to the fucolectin family. Homotrimer. In terms of tissue distribution, parenchymal hepatocytes.

The protein localises to the secreted. Its subcellular location is the extracellular space. In terms of biological role, acts as a defensive agent. Recognizes blood group fucosylated oligosaccharides including A, B, H and Lewis B-type antigens. Does not recognize Lewis A antigen and has low affinity for monovalent haptens. The sequence is that of Fucolectin-2 from Anguilla japonica (Japanese eel).